The primary structure comprises 543 residues: Acrosin-binding protein (543 aa).

Positions 1–25 (MGQPAAGSILTLLRVLLLPLGPALA) are cleaved as a signal peptide. Residues 26-106 (QDSPSAPTPG…ASWFESFCQF (81 aa)) form a pro-ACR binding region. The propeptide at 26-276 (QDSPSAPTPG…DPHSFTARVR (251 aa)) is removed in mature form. Positions 187 to 239 (AGQEQAAGHKQEQGQEQHKQDPTQEHKQDDGQEQEEQEEEQEEEGKQEEGQSV) are disordered. The segment covering 193–216 (AGHKQEQGQEQHKQDPTQEHKQDD) has biased composition (basic and acidic residues). The segment covering 217–232 (GQEQEEQEEEQEEEGK) has biased composition (acidic residues). A pro-ACR binding region spans residues 319-427 (LPHKEALLVL…TQAGTSESGR (109 aa)).

In terms of assembly, binds proacrosin (ACR). Does not bind the mature form of ACR. Post-translationally, the N-terminus is blocked. In terms of processing, phosphorylated on Tyr residues in capacitated sperm. Synthesized as a 60-kDa precursor, the 32-kDa mature form is post-translationally produced by the removal of the N-terminal half of the precursor during sperm maturation in the testis and/or epididymis. Specifically expressed in testis.

Its subcellular location is the secreted. The protein resides in the cytoplasmic vesicle. It localises to the secretory vesicle. It is found in the acrosome. Its function is as follows. Acrosomal protein that maintains proacrosin (pro-ACR) as an enzymatically inactive zymogen in the acrosome. Involved also in the acrosome formation. The protein is Acrosin-binding protein (ACRBP) of Cavia porcellus (Guinea pig).